A 37-amino-acid polypeptide reads, in one-letter code: Large ribosomal subunit protein bL36 (37 aa).

Belongs to the bacterial ribosomal protein bL36 family.

The chain is Large ribosomal subunit protein bL36 from Deinococcus deserti (strain DSM 17065 / CIP 109153 / LMG 22923 / VCD115).